The following is a 495-amino-acid chain: Muscle LIM protein Mlp84B (495 aa).

An LIM zinc-binding 1 domain is found at 12–63 (CPRCGKSVYAAEERLAGGYVFHKNCFKCGMCNKSLDSTNCTEHERELYCKTC). The Nuclear localization signal motif lies at 66 to 71 (RKFGPK). In terms of domain architecture, LIM zinc-binding 2 spans 120–172 (CPRCGGYVYAAEQMLARGRSWHKECFKCGTCKKGLDSILCCEAPDKNIYCKGC). The Nuclear localization signal signature appears at 175 to 180 (KKFGPK). LIM zinc-binding domains are found at residues 222–274 (CPRC…CRTC), 325–377 (CPRC…CRAC), and 421–473 (CPRC…CRAC).

As to expression, in the embryo, expression is restricted to the somatic, visceral, and pharyngeal muscles. Within the somatic musculature, expression is localized at the ends of muscles fibers at the point of attachment to the epidermis (at protein level). There is no expression in cardiac mesoderm or in fat body.

Its subcellular location is the cytoplasm. The protein localises to the nucleus. Its function is as follows. Plays a role in cell differentiation late in myogenesis. Transcription factor Mef2 is essential for expression. The polypeptide is Muscle LIM protein Mlp84B (Drosophila melanogaster (Fruit fly)).